We begin with the raw amino-acid sequence, 938 residues long: Myocardin (938 aa).

An MEF2C-binding motif is present at residues 12–27 (IRSKFRSVLQLRLQQR). Residues 18 to 43 (SVLQLRLQQRRTQEQLANQGIIPPLK) form an RPEL 1 repeat. The span at 48–61 (FHEQRKHLDSDKAK) shows a compositional bias: basic and acidic residues. The tract at residues 48-68 (FHEQRKHLDSDKAKNSLKRKA) is disordered. RPEL repeat units lie at residues 62–87 (NSLKRKARNRCNSADLVNMHILQAST) and 106–131 (DDLNEKIALRPGPLELVEKNILPVDS). The segment at 153–205 (FEEDSSSDGLSPDQTRSEDPQNSAGSPPDAKASDTPSTGSLGTNQDLASGSEN) is HDAC5-binding. The interval 154-281 (EEDSSSDGLS…DQKAEKSPPP (128 aa)) is disordered. Polar residues-rich tracts occupy residues 159-177 (SDGLSPDQTRSEDPQNSAG), 186-203 (DTPSTGSLGTNQDLASGS), and 210-220 (SASQPSHQSDA). Basic residues predominate over residues 248–265 (NRHKKPKDPKPKVKKLKY). Residues 371 to 405 (LDDLKVSELRQQLRIRGLPVSGTKTALMDRLRPFQ) enclose the SAP domain. Ser451, Ser455, Ser459, and Ser463 each carry phosphoserine; by GSK3-beta. A coiled-coil region spans residues 516 to 561 (EKDKMLVEKQKVINELTWKLQQEQRQVEELRMQLQKQKRNNCSEKK). 4 positions are modified to phosphoserine; by GSK3-beta: Ser626, Ser630, Ser634, and Ser638. Disordered stretches follow at residues 635 to 678 (PQHS…SSPI) and 693 to 734 (SDKV…MTRS). A compositionally biased stretch (low complexity) spans 699–715 (KFSIPSPTFSKSSSAIS). Positions 717-938 (VTQPPSYEDA…SSMDLHLQQW (222 aa)) are required for interaction with and ubiquitination by STUB1. Ser815, Ser862, and Ser869 each carry phosphoserine; by MAPK1 and MAPK3. At Thr896 the chain carries Phosphothreonine; by MAPK1 and MAPK3.

In terms of assembly, homodimer. Interacts with SRF, its association does not depend on specific DNA sequences for ternary complex formation. Interacts with MLLT7/FOXO4. Interacts (via C-terminal) with EP300 (via the CREB-binding domain). Interacts with HDAC4 and HDAC5. Interacts with MEF2C. Interacts (via C-terminus) with STUB1/CHIP. Interacts with PURB. Ubiquitinated; by STUB1/CHIP at the C-terminus, leading to its degradation by the proteasome. Phosphorylation by GSK3B is required for STUB1/CHIP-mediated ubiquitination. Post-translationally, phosphorylation negatively regulates the intrinsic myocardin transcriptional activity. Phosphorylated; by GSK3B. In terms of tissue distribution, expressed in the heart, aorta and bladder. Expressed in smooth muscle cell-containing tissues: stomach, small intestine, colon, lung, placenta and uterus. Very faint expression in prostate and skeletal muscle.

It localises to the nucleus. In terms of biological role, smooth muscle cells (SM) and cardiac muscle cells-specific transcriptional factor which uses the canonical single or multiple CArG boxes DNA sequence. Acts as a cofactor of serum response factor (SRF) with the potential to modulate SRF-target genes. Plays a crucial role in cardiogenesis, urinary bladder development, and differentiation of the smooth muscle cell lineage (myogenesis). Positively regulates the transcription of genes involved in vascular smooth muscle contraction. The protein is Myocardin (MYOCD) of Homo sapiens (Human).